The sequence spans 376 residues: Lipid-A-disaccharide synthase (376 aa).

This sequence belongs to the LpxB family.

The enzyme catalyses a lipid X + a UDP-2-N,3-O-bis[(3R)-3-hydroxyacyl]-alpha-D-glucosamine = a lipid A disaccharide + UDP + H(+). Its pathway is bacterial outer membrane biogenesis; LPS lipid A biosynthesis. In terms of biological role, condensation of UDP-2,3-diacylglucosamine and 2,3-diacylglucosamine-1-phosphate to form lipid A disaccharide, a precursor of lipid A, a phosphorylated glycolipid that anchors the lipopolysaccharide to the outer membrane of the cell. The protein is Lipid-A-disaccharide synthase of Pseudomonas fluorescens (strain Pf0-1).